A 290-amino-acid polypeptide reads, in one-letter code: Tubulin polyglutamylase complex subunit 1 (290 aa).

Positions 1 to 30 are disordered; that stretch reads MAAVEKRRQAVPPPAGFTDSGRQSVSRAAG. A phosphoserine mark is found at Ser34 and Ser266.

Part of the neuronal tubulin polyglutamylase complex which contains TPGS1, TPGS2, TTLL1, LRRC49 and NICN1. Interacts with PCM1, CSTPP1 and LRRC49.

Its subcellular location is the cytoplasm. It is found in the cytoskeleton. It localises to the cilium axoneme. The protein resides in the flagellum axoneme. The protein localises to the cilium basal body. Its subcellular location is the flagellum basal body. It is found in the cell projection. It localises to the axon. The protein resides in the dendrite. The protein localises to the microtubule organizing center. Its subcellular location is the centrosome. It is found in the centriolar satellite. Its function is as follows. Subunit of the tubulin polyglutamylase complex (TPGC). The complex mediates cilia and flagella polyglutamylation which is essential for their biogenesis and motility. May act in the targeting of the tubulin polyglutamylase complex. Required for the development of the spermatid flagellum. The protein is Tubulin polyglutamylase complex subunit 1 of Homo sapiens (Human).